Consider the following 714-residue polypeptide: Polyribonucleotide nucleotidyltransferase (714 aa).

Mg(2+)-binding residues include Asp-489 and Asp-495. Residues 556–615 form the KH domain; it reads PKIDTIKIDVDKIKVVIGKGGETIDKIIAETGVKIDIDEEGNVSIYSSDQDAINRAKEII. Positions 625 to 693 constitute an S1 motif domain; the sequence is GEVYHAKVVR…DKGRIDASMK (69 aa). Positions 691–714 are disordered; it reads SMKALVPRPPKPEKSEAKKEGKHD. Residues 700–714 are compositionally biased toward basic and acidic residues; sequence PKPEKSEAKKEGKHD.

It belongs to the polyribonucleotide nucleotidyltransferase family. The cofactor is Mg(2+).

The protein localises to the cytoplasm. The catalysed reaction is RNA(n+1) + phosphate = RNA(n) + a ribonucleoside 5'-diphosphate. In terms of biological role, involved in mRNA degradation. Catalyzes the phosphorolysis of single-stranded polyribonucleotides processively in the 3'- to 5'-direction. This is Polyribonucleotide nucleotidyltransferase from Streptococcus equi subsp. zooepidemicus (strain H70).